We begin with the raw amino-acid sequence, 275 residues long: Elongation factor Ts (275 aa).

Residues 76 to 79 form an involved in Mg(2+) ion dislocation from EF-Tu region; sequence TDFV.

This sequence belongs to the EF-Ts family.

The protein resides in the cytoplasm. Functionally, associates with the EF-Tu.GDP complex and induces the exchange of GDP to GTP. It remains bound to the aminoacyl-tRNA.EF-Tu.GTP complex up to the GTP hydrolysis stage on the ribosome. This Rhodococcus opacus (strain B4) protein is Elongation factor Ts.